The chain runs to 905 residues: Alanine--tRNA ligase (905 aa).

Zn(2+) contacts are provided by histidine 595, histidine 599, cysteine 696, and histidine 700.

This sequence belongs to the class-II aminoacyl-tRNA synthetase family. The cofactor is Zn(2+).

It localises to the cytoplasm. It carries out the reaction tRNA(Ala) + L-alanine + ATP = L-alanyl-tRNA(Ala) + AMP + diphosphate. Catalyzes the attachment of alanine to tRNA(Ala) in a two-step reaction: alanine is first activated by ATP to form Ala-AMP and then transferred to the acceptor end of tRNA(Ala). Also edits incorrectly charged Ser-tRNA(Ala) and Gly-tRNA(Ala) via its editing domain. This Anaeromyxobacter dehalogenans (strain 2CP-C) protein is Alanine--tRNA ligase.